The chain runs to 296 residues: 4-hydroxy-tetrahydrodipicolinate synthase (296 aa).

Residue threonine 49 participates in pyruvate binding. Tyrosine 137 serves as the catalytic Proton donor/acceptor. Lysine 166 (schiff-base intermediate with substrate) is an active-site residue. Residue isoleucine 208 coordinates pyruvate.

It belongs to the DapA family. In terms of assembly, homotetramer; dimer of dimers.

The protein localises to the cytoplasm. The catalysed reaction is L-aspartate 4-semialdehyde + pyruvate = (2S,4S)-4-hydroxy-2,3,4,5-tetrahydrodipicolinate + H2O + H(+). The protein operates within amino-acid biosynthesis; L-lysine biosynthesis via DAP pathway; (S)-tetrahydrodipicolinate from L-aspartate: step 3/4. Catalyzes the condensation of (S)-aspartate-beta-semialdehyde [(S)-ASA] and pyruvate to 4-hydroxy-tetrahydrodipicolinate (HTPA). The protein is 4-hydroxy-tetrahydrodipicolinate synthase of Chlorobium luteolum (strain DSM 273 / BCRC 81028 / 2530) (Pelodictyon luteolum).